We begin with the raw amino-acid sequence, 171 residues long: Large ribosomal subunit protein uL10 (171 aa).

Belongs to the universal ribosomal protein uL10 family. In terms of assembly, part of the ribosomal stalk of the 50S ribosomal subunit. The N-terminus interacts with L11 and the large rRNA to form the base of the stalk. The C-terminus forms an elongated spine to which L12 dimers bind in a sequential fashion forming a multimeric L10(L12)X complex.

Functionally, forms part of the ribosomal stalk, playing a central role in the interaction of the ribosome with GTP-bound translation factors. The protein is Large ribosomal subunit protein uL10 of Paracoccus denitrificans (strain Pd 1222).